We begin with the raw amino-acid sequence, 2335 residues long: uncharacterized protein (2335 aa).

Transmembrane regions (helical) follow at residues 114-134 (FMIGLLNSVFLCLPTSIAHII), 148-167 (FISGLGTIAGNIVWIGSIVF), 172-194 (VVIPWLSLDLFRAFLGFVLIVKY), 214-234 (IFFLTFLLSFTEQTTIYPFLS), 255-275 (EFGFVHLCYLLGILVGSLSLL), and 307-327 (FVNLTFLYLTMICAISNIAYF). Residues 1043–1052 (ATSESISFNQ) show a composition bias toward polar residues. The interval 1043 to 1064 (ATSESISFNQTKEKSNSTLGRL) is disordered. 2 coiled-coil regions span residues 1174–1202 (VTLKKEKYENKKQKHERYLKNRLERMKEA) and 1417–1447 (KKRENALSKRRKIRKTLKRLRNQNTSTEKIV). Residues 1458–1471 (QTSQLTKNSFNPSR) show a composition bias toward polar residues. The interval 1458-1479 (QTSQLTKNSFNPSRQKTDKNLE) is disordered. A helical transmembrane segment spans residues 2086 to 2106 (VWFPSGSLSQQVLPVHYIYVF). The segment at 2200-2222 (KQEKRILKSKQRRKITDSKQSTE) is disordered.

Belongs to the ycf78 family.

The protein localises to the plastid. Its subcellular location is the chloroplast membrane. This is an uncharacterized protein from Tetradesmus obliquus (Green alga).